The chain runs to 118 residues: Large ribosomal subunit protein uL22 (118 aa).

This sequence belongs to the universal ribosomal protein uL22 family. In terms of assembly, part of the 50S ribosomal subunit.

In terms of biological role, this protein binds specifically to 23S rRNA; its binding is stimulated by other ribosomal proteins, e.g. L4, L17, and L20. It is important during the early stages of 50S assembly. It makes multiple contacts with different domains of the 23S rRNA in the assembled 50S subunit and ribosome. Functionally, the globular domain of the protein is located near the polypeptide exit tunnel on the outside of the subunit, while an extended beta-hairpin is found that lines the wall of the exit tunnel in the center of the 70S ribosome. This chain is Large ribosomal subunit protein uL22, found in Synechococcus sp. (strain RCC307).